Here is a 229-residue protein sequence, read N- to C-terminus: Orotidine 5'-phosphate decarboxylase (229 aa).

Residues Asp12, Lys34, 61–70 (DWKLHDIGAT), Thr116, Arg177, Gln186, Gly206, and Arg207 each bind substrate. The active-site Proton donor is Lys63.

This sequence belongs to the OMP decarboxylase family. Type 1 subfamily. As to quaternary structure, homodimer.

The catalysed reaction is orotidine 5'-phosphate + H(+) = UMP + CO2. It participates in pyrimidine metabolism; UMP biosynthesis via de novo pathway; UMP from orotate: step 2/2. In terms of biological role, catalyzes the decarboxylation of orotidine 5'-monophosphate (OMP) to uridine 5'-monophosphate (UMP). The polypeptide is Orotidine 5'-phosphate decarboxylase (Caulobacter sp. (strain K31)).